Here is a 431-residue protein sequence, read N- to C-terminus: Maintenance of mitochondrial morphology protein 1 (431 aa).

The Lumenal segment spans residues 1–103 (MVSALEVKSI…QLISWSFAQG (103 aa)). A helical transmembrane segment spans residues 104-124 (LIIGQLSVVIFLIFFVKFFIF). Residues 125 to 431 (TDASSKMDNP…EDESSKTPHS (307 aa)) are Cytoplasmic-facing. One can recognise an SMP-LTD domain in the interval 192–404 (SAESLDWFNV…EPRFQSVKLP (213 aa)). The disordered stretch occupies residues 412 to 431 (NTREEVIHKTEDESSKTPHS).

The protein belongs to the MMM1 family. In terms of assembly, homodimer. Component of the ER-mitochondria encounter structure (ERMES) or MDM complex, composed of MMM1, MDM10, MDM12 and MDM34. An MMM1 homodimer associates with one molecule of MDM12 on each side in a pairwise head-to-tail manner, and the SMP-LTD domains of MMM1 and MDM12 generate a continuous hydrophobic tunnel for phospholipid trafficking.

It localises to the endoplasmic reticulum membrane. Component of the ERMES/MDM complex, which serves as a molecular tether to connect the endoplasmic reticulum (ER) and mitochondria. Components of this complex are involved in the control of mitochondrial shape and protein biogenesis, and function in nonvesicular lipid trafficking between the ER and mitochondria. The MDM12-MMM1 subcomplex functions in the major beta-barrel assembly pathway that is responsible for biogenesis of all outer membrane beta-barrel proteins, and acts in a late step after the SAM complex. The MDM10-MDM12-MMM1 subcomplex further acts in the TOM40-specific pathway after the action of the MDM12-MMM1 complex. Essential for establishing and maintaining the structure of mitochondria and maintenance of mtDNA nucleoids. This is Maintenance of mitochondrial morphology protein 1 from Candida glabrata (strain ATCC 2001 / BCRC 20586 / JCM 3761 / NBRC 0622 / NRRL Y-65 / CBS 138) (Yeast).